Here is a 109-residue protein sequence, read N- to C-terminus: Putative double-stranded DNA mimic protein YciU (109 aa).

This sequence belongs to the putative dsDNA mimic protein family.

Its function is as follows. May act as a double-stranded DNA (dsDNA) mimic. Probably regulates the activity of a dsDNA-binding protein. In Escherichia coli O45:K1 (strain S88 / ExPEC), this protein is Putative double-stranded DNA mimic protein YciU.